Consider the following 273-residue polypeptide: Formamidopyrimidine-DNA glycosylase (273 aa).

The active-site Schiff-base intermediate with DNA is the Pro2. Glu3 serves as the catalytic Proton donor. Lys60 (proton donor; for beta-elimination activity) is an active-site residue. DNA-binding residues include His94, Arg113, and Lys154. An FPG-type zinc finger spans residues 239–273 (EAYGRTGEPCRRCGTPIERIVVAQRSTHICPVCQA). The active-site Proton donor; for delta-elimination activity is Arg263.

This sequence belongs to the FPG family. As to quaternary structure, monomer. Zn(2+) serves as cofactor.

The catalysed reaction is Hydrolysis of DNA containing ring-opened 7-methylguanine residues, releasing 2,6-diamino-4-hydroxy-5-(N-methyl)formamidopyrimidine.. It carries out the reaction 2'-deoxyribonucleotide-(2'-deoxyribose 5'-phosphate)-2'-deoxyribonucleotide-DNA = a 3'-end 2'-deoxyribonucleotide-(2,3-dehydro-2,3-deoxyribose 5'-phosphate)-DNA + a 5'-end 5'-phospho-2'-deoxyribonucleoside-DNA + H(+). In terms of biological role, involved in base excision repair of DNA damaged by oxidation or by mutagenic agents. Acts as a DNA glycosylase that recognizes and removes damaged bases. Has a preference for oxidized purines, such as 7,8-dihydro-8-oxoguanine (8-oxoG). Has AP (apurinic/apyrimidinic) lyase activity and introduces nicks in the DNA strand. Cleaves the DNA backbone by beta-delta elimination to generate a single-strand break at the site of the removed base with both 3'- and 5'-phosphates. In Herpetosiphon aurantiacus (strain ATCC 23779 / DSM 785 / 114-95), this protein is Formamidopyrimidine-DNA glycosylase.